Here is a 378-residue protein sequence, read N- to C-terminus: Zinc transporter 7 (378 aa).

Topologically, residues 1–37 are cytoplasmic; it reads MLPLSIKDDEYKPPRLNLFRKMSGWFRSILADKTSRN. The chain crosses the membrane as a helical span at residues 38-58; the sequence is LFFFLCLNLSFAFVELLYGVW. The Lumenal segment spans residues 59-67; the sequence is SNSLGLISD. The chain crosses the membrane as a helical span at residues 68–88; the sequence is SFHMFFDCTALLAGLAASVIS. Topologically, residues 89–102 are cytoplasmic; the sequence is KWRSNDAFSYGYVR. A helical transmembrane segment spans residues 103–123; that stretch reads AEVLAGFVNGLFLIFTAFFIF. Residues 124–140 lie on the Lumenal side of the membrane; that stretch reads SEGVERALEPPDVHHER. A helical transmembrane segment spans residues 141–161; it reads LLPVSILGFIVNLIGIFVFQH. The interval 161-223 is his-rich loop; the sequence is HGGHGHSHGS…HGQDYCHDDH (63 aa). Residues 162 to 238 lie on the Cytoplasmic side of the membrane; sequence GGHGHSHGSG…TGSSKQILQG (77 aa). A disordered region spans residues 185-214; the sequence is HGHSHRGHGHSHEHKHGHTHDHGHSHGLSH. Basic residues predominate over residues 186–211; the sequence is GHSHRGHGHSHEHKHGHTHDHGHSHG. The chain crosses the membrane as a helical span at residues 239-259; it reads VFLHIVADTLGSIGVIISAIL. The Lumenal segment spans residues 260–264; the sequence is MQNYG. A helical transmembrane segment spans residues 265-285; it reads LMIADPICSMLIALLIGVSIV. The Cytoplasmic segment spans residues 286 to 378; the sequence is PLLKESIGIL…LYIQIDVAAM (93 aa).

The protein belongs to the cation diffusion facilitator (CDF) transporter (TC 2.A.4) family. SLC30A subfamily. In terms of assembly, homooligomer.

Its subcellular location is the golgi apparatus membrane. It localises to the cytoplasmic vesicle. The protein localises to the golgi apparatus. The protein resides in the trans-Golgi network. It is found in the sarcoplasmic reticulum. Its subcellular location is the mitochondrion. It catalyses the reaction Zn(2+)(in) = Zn(2+)(out). Functionally, zinc ion transporter mediating zinc entry from the cytosol into the lumen of organelles along the secretory pathway. By contributing to zinc ion homeostasis within the early secretory pathway, regulates the activation and folding of enzymes like alkaline phosphatases. In Gallus gallus (Chicken), this protein is Zinc transporter 7 (SLC30A7).